Here is a 282-residue protein sequence, read N- to C-terminus: Probable endonuclease 4 (282 aa).

Zn(2+)-binding residues include His69, His109, Glu145, Asp179, His182, His216, Asp229, His231, and Glu261.

Belongs to the AP endonuclease 2 family. Requires Zn(2+) as cofactor.

It catalyses the reaction Endonucleolytic cleavage to 5'-phosphooligonucleotide end-products.. In terms of biological role, endonuclease IV plays a role in DNA repair. It cleaves phosphodiester bonds at apurinic or apyrimidinic (AP) sites, generating a 3'-hydroxyl group and a 5'-terminal sugar phosphate. This chain is Probable endonuclease 4, found in Magnetococcus marinus (strain ATCC BAA-1437 / JCM 17883 / MC-1).